We begin with the raw amino-acid sequence, 318 residues long: NADH-ubiquinone oxidoreductase chain 1 (318 aa).

Transmembrane regions (helical) follow at residues 2-22 (FMINVLTLIIPILLAVAFLTL), 68-88 (ISMFILAPILALTLALTMWIP), 100-120 (LGVLFMLAMSSLAVYSILWSG), 147-167 (AIILLSVLLMNGSFTLSTLII), 172-192 (VWLIFPAWPLAMMWFISTLAE), 217-237 (AGPFALFFMAEYANIIMMNIF), 253-273 (ELYTINFTIKSLLLSITFLWI), and 294-314 (LPLTLALCMWHVSLPILLSSI).

The protein belongs to the complex I subunit 1 family.

It is found in the mitochondrion inner membrane. It catalyses the reaction a ubiquinone + NADH + 5 H(+)(in) = a ubiquinol + NAD(+) + 4 H(+)(out). In terms of biological role, core subunit of the mitochondrial membrane respiratory chain NADH dehydrogenase (Complex I) that is believed to belong to the minimal assembly required for catalysis. Complex I functions in the transfer of electrons from NADH to the respiratory chain. The immediate electron acceptor for the enzyme is believed to be ubiquinone. The polypeptide is NADH-ubiquinone oxidoreductase chain 1 (MT-ND1) (Ovis aries (Sheep)).